Reading from the N-terminus, the 211-residue chain is Soluble inorganic pyrophosphatase PPA1 (211 aa).

Residues Lys-61 and Arg-75 each contribute to the substrate site. Tyr-83 functions as the Proton donor in the catalytic mechanism. Tyr-87 serves as a coordination point for substrate. The Mg(2+) site is built by Asp-97, Asp-102, and Asp-134. A substrate-binding site is contributed by Tyr-171.

This sequence belongs to the PPase family. Mg(2+) serves as cofactor.

It localises to the cytoplasm. It catalyses the reaction diphosphate + H2O = 2 phosphate + H(+). With respect to regulation, strongly inhibited by Ca(2+). Its function is as follows. Catalyzes the irreversible hydrolysis of pyrophosphate (PPi) to phosphate. The polypeptide is Soluble inorganic pyrophosphatase PPA1 (Solanum tuberosum (Potato)).